The primary structure comprises 505 residues: Prenylcysteine oxidase 1 (505 aa).

The signal sequence occupies residues 1 to 27 (MGRVVAELVSSLLGLWLLLCSCGCPEG). 3 N-linked (GlcNAc...) asparagine glycosylation sites follow: Asn196, Asn323, and Asn353.

The protein belongs to the prenylcysteine oxidase family. FAD serves as cofactor.

It localises to the lysosome. It catalyses the reaction an S-polyprenyl-L-cysteine + O2 + H2O = a polyprenal + L-cysteine + H2O2. The enzyme catalyses S-(2E,6E)-farnesyl-L-cysteine + O2 + H2O = (2E,6E)-farnesal + L-cysteine + H2O2. It carries out the reaction [(2E,6E,10E)-geranylgeranyl]-L-cysteine + O2 + H2O = (2E,6E,10E)-geranylgeranial + L-cysteine + H2O2. Its function is as follows. Prenylcysteine oxidase that cleaves the thioether bond of prenyl-L-cysteines, such as farnesylcysteine and geranylgeranylcysteine. Only active against free prenylcysteines and not prenylcysteine residues within prenylated proteins or peptides. Involved in the final step in the degradation of prenylated proteins, by degrading prenylcysteines after the protein has been degraded. In Pongo abelii (Sumatran orangutan), this protein is Prenylcysteine oxidase 1.